The sequence spans 321 residues: uncharacterized protein (321 aa).

Residues 1–58 enclose the HTH lysR-type domain; that stretch reads MTPAQLRAYSAVVRLGSVRAAAAELGLSDAGVSMHVAALRKELDDPLFTRTGAGLAFT. Residues 18-37 constitute a DNA-binding region (H-T-H motif); that stretch reads VRAAAAELGLSDAGVSMHVA.

Belongs to the LysR transcriptional regulatory family.

This is an uncharacterized protein from Mycobacterium tuberculosis (strain CDC 1551 / Oshkosh).